The primary structure comprises 1525 residues: Multidrug resistance-associated protein 1 (1525 aa).

Residues 1-33 (MGIESLCSADASEPFWDWNLTWHTENPDFTQCF) are Extracellular-facing. A helical transmembrane segment spans residues 34–54 (QNTVLVWVPCIYLWVCFPAYF). Residues 55-74 (LYLRSHDRGYIQMSILNKAK) are Cytoplasmic-facing. A helical transmembrane segment spans residues 75–95 (TALGLILWIVCWADLFYSFWE). The Extracellular portion of the chain corresponds to 96 to 100 (RSQNI). Residues 101–121 (FRAPFFLISPTVLGITMLLAT) form a helical membrane-spanning segment. The Cytoplasmic segment spans residues 122 to 133 (FLIQHERLKGVQ). Residues 134–154 (SSGVMMIFWLISLLCATVIFR) traverse the membrane as a helical segment. At 155-172 (SKIMLALNTDTEVDAFRY) the chain is on the extracellular side. A helical transmembrane segment spans residues 173 to 193 (VTFCTYFILLLVQLILSCFPE). The Cytoplasmic portion of the chain corresponds to 194-315 (KPPLFSEAVN…RSSEASLSKV (122 aa)). Residues 316 to 336 (LYKTFGPYFLMSFLFKAAHDL) traverse the membrane as a helical segment. In terms of domain architecture, ABC transmembrane type-1 1 spans 324–607 (FLMSFLFKAA…LPMVISSIVE (284 aa)). Over 337–362 (LMFTGPEILKLLINFVNNKSAPNWQG) the chain is Extracellular. The chain crosses the membrane as a helical span at residues 363–383 (YFYTGLLFVCACLQTLILHQY). Over 384-439 (FHICFVTGMRLKTAIVGVIYRKALVITNSARKTSTVGEIVNLMSVDAQRFMDLATY) the chain is Cytoplasmic. The helical transmembrane segment at 440 to 460 (INMIWSAPLQVILALYLLWRN) threads the bilayer. Residues 461 to 463 (LGP) lie on the Extracellular side of the membrane. Residues 464–484 (SVLAGVAVMILLVPINAVMAM) form a helical membrane-spanning segment. The Cytoplasmic segment spans residues 485-546 (KTKTYQVAQM…VLKKSAYLAA (62 aa)). A helical transmembrane segment spans residues 547-567 (MGTFTWVCAPFLVALSTFAVY). At 568–589 (VKVNKNNILDAQKAFVSLALFN) the chain is on the extracellular side. Residues 590–610 (ILRFPLNILPMVISSIVEASV) traverse the membrane as a helical segment. At 611–961 (SLKRLRVFLS…VKATVYWEYM (351 aa)) the chain is on the cytoplasmic side. Residues 641 to 865 (IVVKNATFSW…DGAFAEFLRT (225 aa)) enclose the ABC transporter 1 domain. 675–682 (GQVGCGKS) contributes to the ATP binding site. Polar residues-rich tracts occupy residues 871 to 882 (QSMESSDASSPS) and 908 to 928 (SNSS…STAE). Disordered stretches follow at residues 871–891 (QSME…PVEN) and 908–930 (SNSS…AELQ). Residues 962–982 (KAIGLYISFLSVFLFMCNHIA) form a helical membrane-spanning segment. An ABC transmembrane type-1 2 domain is found at 969–1250 (SFLSVFLFMC…LVRMTSDLET (282 aa)). The Extracellular segment spans residues 983 to 1019 (SLASNYWLSLWTDDPVVNGTQQYTNVRLGVYGALGIS). Residues 1020-1040 (QGIAVFGYSMAVSIGGIFASR) traverse the membrane as a helical segment. Residues 1041–1083 (HLHLDLLHNVLRSPMSFFERTPSGNLVSRFSKEIDTIDSTIPP) are Cytoplasmic-facing. The helical transmembrane segment at 1084–1104 (IIKMFMGSTFNVIGACIIILL) threads the bilayer. Residue alanine 1105 is a topological domain, extracellular. The chain crosses the membrane as a helical span at residues 1106–1126 (TPIAAVVIPPLGLVYLLVQRF). Topologically, residues 1127–1197 (YVATSRQLKR…VANRWLAVRL (71 aa)) are cytoplasmic. Residues 1198-1218 (EFVGNCIVLFAALFAVIARNK) form a helical membrane-spanning segment. At 1219 to 1220 (LS) the chain is on the extracellular side. The chain crosses the membrane as a helical span at residues 1221–1241 (PGLIGLSVSYSLQITAYLNWL). The Cytoplasmic portion of the chain corresponds to 1242–1525 (VRMTSDLETN…YSMAKDSGLA (284 aa)). The ABC transporter 2 domain occupies 1289-1521 (FRGFGLRYRE…KGLFYSMAKD (233 aa)). 1321 to 1328 (GRTGAGKS) is an ATP binding site.

The protein belongs to the ABC transporter superfamily. ABCC family. Conjugate transporter (TC 3.A.1.208) subfamily.

Its subcellular location is the cell membrane. The catalysed reaction is ATP + H2O + xenobioticSide 1 = ADP + phosphate + xenobioticSide 2.. It carries out the reaction an S-substituted glutathione(in) + ATP + H2O = an S-substituted glutathione(out) + ADP + phosphate + H(+). The enzyme catalyses sphing-4-enine 1-phosphate(in) + ATP + H2O = sphing-4-enine 1-phosphate(out) + ADP + phosphate + H(+). It catalyses the reaction leukotriene C4(in) + ATP + H2O = leukotriene C4(out) + ADP + phosphate + H(+). The catalysed reaction is 17beta-estradiol 17-O-(beta-D-glucuronate)(in) + ATP + H2O = 17beta-estradiol 17-O-(beta-D-glucuronate)(out) + ADP + phosphate + H(+). It carries out the reaction 2',3'-cGAMP(in) + ATP + H2O = 2',3'-cGAMP(out) + ADP + phosphate + H(+). Its function is as follows. Mediates export of organic anions and drugs from the cytoplasm. Mediates ATP-dependent transport of glutathione and glutathione conjugates, leukotriene C4, estradiol-17-beta-o-glucuronide and other xenobiotics. Hydrolyzes ATP with low efficiency. Mediates ATP-dependent, GSH-independent cyclic GMP-AMP (cGAMP) export. Thus, by limiting intracellular cGAMP concentrations negatively regulates the cGAS-STING pathway. This chain is Multidrug resistance-associated protein 1, found in Gallus gallus (Chicken).